The sequence spans 103 residues: Large ribosomal subunit protein uL24 (103 aa).

It belongs to the universal ribosomal protein uL24 family. In terms of assembly, part of the 50S ribosomal subunit.

Its function is as follows. One of two assembly initiator proteins, it binds directly to the 5'-end of the 23S rRNA, where it nucleates assembly of the 50S subunit. One of the proteins that surrounds the polypeptide exit tunnel on the outside of the subunit. The protein is Large ribosomal subunit protein uL24 of Lacticaseibacillus casei (strain BL23) (Lactobacillus casei).